Here is a 154-residue protein sequence, read N- to C-terminus: Prefoldin subunit 2 (154 aa).

Disordered stretches follow at residues M1–A20 and L126–S154. The span at G9–K18 shows a compositional bias: gly residues. A compositionally biased stretch (basic and acidic residues) spans L126 to S139. Low complexity predominate over residues G141–S154.

Belongs to the prefoldin subunit beta family. As to quaternary structure, heterohexamer of two PFD-alpha type and four PFD-beta type subunits. Component of the PAQosome complex which is responsible for the biogenesis of several protein complexes and which consists of R2TP complex members RUVBL1, RUVBL2, RPAP3 and PIH1D1, URI complex members PFDN2, PFDN6, PDRG1, UXT and URI1 as well as ASDURF, POLR2E and DNAAF10/WDR92. Interacts with URI1; the interaction is phosphorylation-dependent and occurs in a growth-dependent manner.

It localises to the nucleus. The protein resides in the cytoplasm. The protein localises to the mitochondrion. Functionally, binds specifically to cytosolic chaperonin (c-CPN) and transfers target proteins to it. Binds to nascent polypeptide chain and promotes folding in an environment in which there are many competing pathways for nonnative proteins. In Rattus norvegicus (Rat), this protein is Prefoldin subunit 2 (Pfdn2).